A 333-amino-acid polypeptide reads, in one-letter code: Glycerol-3-phosphate dehydrogenase [NAD(P)+] (333 aa).

NADPH contacts are provided by S10, F11, R31, and K105. Residues K105, G136, and S138 each contribute to the sn-glycerol 3-phosphate site. A140 provides a ligand contact to NADPH. The sn-glycerol 3-phosphate site is built by K191, D244, S254, R255, and N256. The active-site Proton acceptor is K191. Residue R255 coordinates NADPH. Positions 279 and 281 each coordinate NADPH.

The protein belongs to the NAD-dependent glycerol-3-phosphate dehydrogenase family.

The protein resides in the cytoplasm. It catalyses the reaction sn-glycerol 3-phosphate + NAD(+) = dihydroxyacetone phosphate + NADH + H(+). The enzyme catalyses sn-glycerol 3-phosphate + NADP(+) = dihydroxyacetone phosphate + NADPH + H(+). It functions in the pathway membrane lipid metabolism; glycerophospholipid metabolism. Its function is as follows. Catalyzes the reduction of the glycolytic intermediate dihydroxyacetone phosphate (DHAP) to sn-glycerol 3-phosphate (G3P), the key precursor for phospholipid synthesis. This Leptospira biflexa serovar Patoc (strain Patoc 1 / Ames) protein is Glycerol-3-phosphate dehydrogenase [NAD(P)+].